The following is a 40-amino-acid chain: Photosystem II reaction center protein J (40 aa).

Residues 8-28 (IPLWLIGTVAGIAVIGLVGVF) form a helical membrane-spanning segment.

It belongs to the PsbJ family. In terms of assembly, PSII is composed of 1 copy each of membrane proteins PsbA, PsbB, PsbC, PsbD, PsbE, PsbF, PsbH, PsbI, PsbJ, PsbK, PsbL, PsbM, PsbT, PsbX, PsbY, PsbZ, Psb30/Ycf12, at least 3 peripheral proteins of the oxygen-evolving complex and a large number of cofactors. It forms dimeric complexes.

The protein localises to the plastid. It localises to the chloroplast thylakoid membrane. One of the components of the core complex of photosystem II (PSII). PSII is a light-driven water:plastoquinone oxidoreductase that uses light energy to abstract electrons from H(2)O, generating O(2) and a proton gradient subsequently used for ATP formation. It consists of a core antenna complex that captures photons, and an electron transfer chain that converts photonic excitation into a charge separation. The chain is Photosystem II reaction center protein J from Secale cereale (Rye).